Reading from the N-terminus, the 401-residue chain is Mannan endo-1,4-beta-mannosidase 3 (401 aa).

The signal sequence occupies residues 1–24; sequence MSYTHRRSCISGLFLLLLALSCEA. Positions 84 and 198 each coordinate substrate. The active-site Proton donor is the glutamate 199. Tyrosine 277 provides a ligand contact to substrate. The Nucleophile role is filled by glutamate 317. Tryptophan 356 contacts substrate.

It belongs to the glycosyl hydrolase 5 (cellulase A) family.

It localises to the secreted. The catalysed reaction is Random hydrolysis of (1-&gt;4)-beta-D-mannosidic linkages in mannans, galactomannans and glucomannans.. This is Mannan endo-1,4-beta-mannosidase 3 (MAN3) from Solanum lycopersicum (Tomato).